The primary structure comprises 100 residues: NADH-quinone oxidoreductase subunit K 1 (100 aa).

3 helical membrane-spanning segments follow: residues Leu-4–Val-24, Ile-29–Phe-49, and Ile-60–Met-80.

It belongs to the complex I subunit 4L family. In terms of assembly, NDH-1 is composed of 14 different subunits. Subunits NuoA, H, J, K, L, M, N constitute the membrane sector of the complex.

It is found in the cell inner membrane. The catalysed reaction is a quinone + NADH + 5 H(+)(in) = a quinol + NAD(+) + 4 H(+)(out). NDH-1 shuttles electrons from NADH, via FMN and iron-sulfur (Fe-S) centers, to quinones in the respiratory chain. The immediate electron acceptor for the enzyme in this species is believed to be ubiquinone. Couples the redox reaction to proton translocation (for every two electrons transferred, four hydrogen ions are translocated across the cytoplasmic membrane), and thus conserves the redox energy in a proton gradient. The sequence is that of NADH-quinone oxidoreductase subunit K 1 from Geotalea daltonii (strain DSM 22248 / JCM 15807 / FRC-32) (Geobacter daltonii).